We begin with the raw amino-acid sequence, 572 residues long: Protein misato homolog 1 (572 aa).

Belongs to the misato family.

The protein localises to the mitochondrion outer membrane. The protein resides in the cytoplasm. Involved in the regulation of mitochondrial distribution and morphology. Required for mitochondrial fusion and mitochondrial network formation. The sequence is that of Protein misato homolog 1 (MSTO1) from Bos taurus (Bovine).